The following is a 165-amino-acid chain: Nucleotide-binding protein Ctha_0558 (165 aa).

It belongs to the YajQ family.

Its function is as follows. Nucleotide-binding protein. This is Nucleotide-binding protein Ctha_0558 from Chloroherpeton thalassium (strain ATCC 35110 / GB-78).